A 346-amino-acid polypeptide reads, in one-letter code: UPF0053 protein sll1254 (346 aa).

4 consecutive transmembrane segments (helical) span residues 1–21 (MLEI…CSCA), 58–78 (IGTI…TIGA), 87–107 (AWMG…GEII), and 121–141 (LLIA…VWLI). The 179-residue stretch at 1 to 179 (MLEIVAAIFI…YKEGVIEGDE (179 aa)) folds into the CNNM transmembrane domain. CBS domains follow at residues 198–259 (MTPR…GYKT) and 263–320 (LARP…IVDE).

Belongs to the UPF0053 family.

The protein resides in the cell membrane. The protein is UPF0053 protein sll1254 of Synechocystis sp. (strain ATCC 27184 / PCC 6803 / Kazusa).